The following is a 67-amino-acid chain: Small ribosomal subunit protein eS17 (67 aa).

Belongs to the eukaryotic ribosomal protein eS17 family.

In Pyrococcus abyssi (strain GE5 / Orsay), this protein is Small ribosomal subunit protein eS17.